The following is a 299-amino-acid chain: CCR4-NOT transcription complex subunit 9 (299 aa).

Position 1 is an N-acetylmethionine (methionine 1).

It belongs to the CNOT9 family. As to quaternary structure, homodimer. Component of the CCR4-NOT complex; distinct complexes seem to exist that differ in the participation of probably mutually exclusive catalytic subunits. Interacts with MYB, ATF2, RARA, RARB, RARG, RXRA, RXRB and RXRG. Identified in a complex with ATF2 bound to target DNA. Interacts with NANOS2. Directly interacts with ZNF335.

Its subcellular location is the nucleus. The protein resides in the cytoplasm. It localises to the P-body. In terms of biological role, component of the CCR4-NOT complex which is one of the major cellular mRNA deadenylases and is linked to various cellular processes including bulk mRNA degradation, miRNA-mediated repression, translational repression during translational initiation and general transcription regulation. Additional complex functions may be a consequence of its influence on mRNA expression. Involved in down-regulation of MYB- and JUN-dependent transcription. Enhances ligand-dependent transcriptional activity of nuclear hormone receptors. May play a role in cell differentiation. The sequence is that of CCR4-NOT transcription complex subunit 9 from Bos taurus (Bovine).